A 431-amino-acid chain; its full sequence is Adenylosuccinate synthetase (431 aa).

GTP contacts are provided by residues 13–19 and 41–43; these read GDEGKGK and GHT. The Proton acceptor role is filled by Asp-14. Residues Asp-14 and Gly-41 each contribute to the Mg(2+) site. IMP contacts are provided by residues 14–17, 39–42, Thr-130, Arg-144, Gln-225, Thr-240, and Arg-304; these read DEGK and NAGH. His-42 acts as the Proton donor in catalysis. 300–306 is a substrate binding site; it reads AVTGRPR. GTP is bound by residues Arg-306, 332–334, and 415–417; these read KLD and STG.

The protein belongs to the adenylosuccinate synthetase family. Homodimer. Requires Mg(2+) as cofactor.

It is found in the cytoplasm. The enzyme catalyses IMP + L-aspartate + GTP = N(6)-(1,2-dicarboxyethyl)-AMP + GDP + phosphate + 2 H(+). It functions in the pathway purine metabolism; AMP biosynthesis via de novo pathway; AMP from IMP: step 1/2. In terms of biological role, plays an important role in the de novo pathway of purine nucleotide biosynthesis. Catalyzes the first committed step in the biosynthesis of AMP from IMP. The protein is Adenylosuccinate synthetase of Legionella pneumophila (strain Lens).